The chain runs to 390 residues: UPF0229 protein ABC1477 (390 aa).

2 disordered regions span residues 1 to 31 and 81 to 118; these read MEKDNGRQFTISQENWSLHRKGFQDQRRHQE and VGQGKGDSKIGDIVARDPNGDKQAGAGKGSGAGDQAGE. Residues 7-16 are compositionally biased toward polar residues; that stretch reads RQFTISQENW. Basic and acidic residues-rich tracts occupy residues 22–31 and 86–100; these read GFQDQRRHQE and GDSKIGDIVARDPNG.

This sequence belongs to the UPF0229 family.

The sequence is that of UPF0229 protein ABC1477 from Shouchella clausii (strain KSM-K16) (Alkalihalobacillus clausii).